The following is a 993-amino-acid chain: Desmoglein-3 (993 aa).

The signal sequence occupies residues 1 to 23 (MTWLLFRTSGALAILMVLILVHG). Residues 24 to 48 (ELRIETKGQHGEDETAIQGRRRYKR) constitute a propeptide that is removed on maturation. Cadherin domains follow at residues 48-156 (REWV…APVF), 157-266 (SQSI…FPMF), 267-386 (KESQ…HPAS), and 383-494 (HPAS…CPTV). The Extracellular segment spans residues 49-617 (EWVKFAKPCR…GKRPSGRLGS (569 aa)). N109 and N179 each carry an N-linked (GlcNAc...) asparagine glycan. 2 N-linked (GlcNAc...) asparagine glycosylation sites follow: N458 and N544. Residues 618–638 (AAIGLLLLGLLLLLLAPLLLL) traverse the membrane as a helical segment. Residues 639 to 993 (TCDYGVGPIG…CTEDPCSRLI (355 aa)) are Cytoplasmic-facing. The segment at 641–713 (DYGVGPIGGV…NTYAGGTVVE (73 aa)) is required for interaction with CTNND1 and localization at cell-cell junctions. Desmoglein repeat repeat units lie at residues 903–929 (LSASSSVLQSATSIPNPVQHGSYMVTE) and 930–960 (TYSASGSLVQPTTTVLEPLLTQNVTVTERVI).

As to quaternary structure, homodimer. Part of a complex that contains DSG3, PKP1, YAP1 and YWHAG; the complex is required for localization of DSG3 and YAP1 to the cell membrane in keratinocytes. Interacts with PKP2. Interacts with CTNND1; the interaction facilitates DSG3 localization and retention at cell-cell junctions. Interacts with CDH1; the interaction is required for CDH1 localization to developing adherens junctions. Interacts with RAC1; the interaction is required for DSG3 translocation to cell-cell junctions, organization of cortical F-actin bundles and actin anchoring at cell-cell junctions. Interacts with DSC3; the interaction may limit the interaction of DSC3 with p38MAPK family members and therefore repress p38MAPK signaling activation.

It localises to the cell membrane. The protein resides in the cell junction. Its subcellular location is the desmosome. The protein localises to the cytoplasm. It is found in the tight junction. A component of desmosome cell-cell junctions which are required for positive regulation of cellular adhesion. Required for adherens and desmosome junction assembly in response to mechanical force in keratinocytes. Required for desmosome-mediated cell-cell adhesion of cells surrounding the telogen hair club and the basal layer of the outer root sheath epithelium, consequently is essential for the anchoring of telogen hairs in the hair follicle. Required for the maintenance of the epithelial barrier via promoting desmosome-mediated intercellular attachment of suprabasal epithelium to basal cells. May play a role in the protein stability of the desmosome plaque components DSP, JUP, PKP1, PKP2 and PKP3. Required for YAP1 localization at the plasma membrane in keratinocytes in response to mechanical strain, via the formation of an interaction complex composed of DSG3, PKP1 and YWHAG. May also be involved in the positive regulation of YAP1 target gene transcription and as a result cell proliferation. Positively regulates cellular contractility and cell junction formation via organization of cortical F-actin bundles and anchoring of actin to tight junctions, in conjunction with RAC1. The cytoplasmic pool of DSG3 is required for the localization of CDH1 and CTNNB1 at developing adherens junctions, potentially via modulation of SRC activity. Inhibits keratinocyte migration via suppression of p38MAPK signaling, may therefore play a role in moderating wound healing. The chain is Desmoglein-3 (DSG3) from Canis lupus familiaris (Dog).